Here is a 602-residue protein sequence, read N- to C-terminus: Putative pentatricopeptide repeat-containing protein At1g12700, mitochondrial (602 aa).

The transit peptide at 1–95 (MMIKRSITTN…PSLVDFSRFF (95 aa)) directs the protein to the mitochondrion. 14 PPR repeats span residues 87–121 (SLVDFSRFFSAIARTKQFNLVLDFCKQLELNGIAH), 122–156 (NIYTLNIMINCFCRCCKTCFAYSVLGKVMKLGYEP), 157–191 (DTTTFNTLIKGLFLEGKVSEAVVLVDRMVENGCQP), 192–226 (DVVTYNSIVNGICRSGDTSLALDLLRKMEERNVKA), 227–261 (DVFTYSTIIDSLCRDGCIDAAISLFKEMETKGIKS), 262–296 (SVVTYNSLVRGLCKAGKWNDGALLLKDMVSREIVP), 297–331 (NVITFNVLLDVFVKEGKLQEANELYKEMITRGISP), 332–366 (NIITYNTLMDGYCMQNRLSEANNMLDLMVRNKCSP), 367–401 (DIVTFTSLIKGYCMVKRVDDGMKVFRNISKRGLVA), 402–436 (NAVTYSILVQGFCQSGKIKLAEELFQEMVSHGVLP), 437–471 (DVMTYGILLDGLCDNGKLEKALEIFEDLQKSKMDL), 472–506 (GIVMYTTIIEGMCKGGKVEDAWNLFCSLPCKGVKP), 507–541 (NVMTYTVMISGLCKKGSLSEANILLRKMEEDGNAP), and 542–576 (NDCTYNTLIRAHLRDGDLTASAKLIEEMKSCGFSA).

The protein belongs to the PPR family. P subfamily.

It localises to the mitochondrion. This chain is Putative pentatricopeptide repeat-containing protein At1g12700, mitochondrial, found in Arabidopsis thaliana (Mouse-ear cress).